A 500-amino-acid chain; its full sequence is Aspartyl/glutamyl-tRNA(Asn/Gln) amidotransferase subunit B (500 aa).

The protein belongs to the GatB/GatE family. GatB subfamily. Heterotrimer of A, B and C subunits.

The catalysed reaction is L-glutamyl-tRNA(Gln) + L-glutamine + ATP + H2O = L-glutaminyl-tRNA(Gln) + L-glutamate + ADP + phosphate + H(+). The enzyme catalyses L-aspartyl-tRNA(Asn) + L-glutamine + ATP + H2O = L-asparaginyl-tRNA(Asn) + L-glutamate + ADP + phosphate + 2 H(+). Functionally, allows the formation of correctly charged Asn-tRNA(Asn) or Gln-tRNA(Gln) through the transamidation of misacylated Asp-tRNA(Asn) or Glu-tRNA(Gln) in organisms which lack either or both of asparaginyl-tRNA or glutaminyl-tRNA synthetases. The reaction takes place in the presence of glutamine and ATP through an activated phospho-Asp-tRNA(Asn) or phospho-Glu-tRNA(Gln). This is Aspartyl/glutamyl-tRNA(Asn/Gln) amidotransferase subunit B from Clavibacter sepedonicus (Clavibacter michiganensis subsp. sepedonicus).